Here is a 258-residue protein sequence, read N- to C-terminus: Short-chain dehydrogenase/reductase aba4 (258 aa).

NADP(+)-binding residues include Ile20, Asp66, and Lys130. Residues Ser146 and Tyr160 each act as proton donor in the active site. NADP(+) is bound by residues Tyr160, Lys164, Ile193, and Thr195. Lys164 (lowers pKa of active site Tyr) is an active-site residue.

The protein belongs to the short-chain dehydrogenases/reductases (SDR) family.

The protein operates within hormone biosynthesis. Short-chain dehydrogenase/reductase; part of the gene cluster that mediates the biosynthesis of abscisic acid (ABA), a phytohormone that acts antagonistically toward salicylic acid (SA), jasmonic acid (JA) and ethylene (ETH) signaling, to impede plant defense responses. The first step of the pathway catalyzes the reaction from farnesyl diphosphate to alpha-ionylideneethane performed by the alpha-ionylideneethane synthase aba3 via a three-step reaction mechanism involving 2 neutral intermediates, beta-farnesene and allofarnesene. The cytochrome P450 monooxygenase aba1 might then be involved in the conversion of alpha-ionylideneethane to alpha-ionylideneacetic acid. Alpha-ionylideneacetic acid is further converted to abscisic acid in 2 steps involving the cytochrome P450 monooxygenase aba2 and the short-chain dehydrogenase/reductase aba4, via the intermediates 1'-deoxy-ABA or 1',4'-trans-diol-ABA, depending on the order of action of these 2 enzymes. Aba2 is responsible for the hydroxylation of carbon atom C-1' and aba4 might be involved in the oxidation of the C-4' carbon atom. This Botryotinia fuckeliana (Noble rot fungus) protein is Short-chain dehydrogenase/reductase aba4.